Here is a 160-residue protein sequence, read N- to C-terminus: Cytochrome b6-f complex subunit 4 (160 aa).

The next 3 membrane-spanning stretches (helical) occupy residues 36–56, 95–115, and 131–151; these read LLYM…GLAV, LLGV…PFIE, and TIFL…TLPI.

Belongs to the cytochrome b family. PetD subfamily. As to quaternary structure, the 4 large subunits of the cytochrome b6-f complex are cytochrome b6, subunit IV (17 kDa polypeptide, petD), cytochrome f and the Rieske protein, while the 4 small subunits are petG, petL, petM and petN. The complex functions as a dimer.

The protein localises to the plastid. It is found in the chloroplast thylakoid membrane. Its function is as follows. Component of the cytochrome b6-f complex, which mediates electron transfer between photosystem II (PSII) and photosystem I (PSI), cyclic electron flow around PSI, and state transitions. This is Cytochrome b6-f complex subunit 4 from Staurastrum punctulatum (Green alga).